The sequence spans 67 residues: Probable Sec-independent protein translocase protein TatE (67 aa).

The chain crosses the membrane as a helical span at residues 4 to 21; that stretch reads ISITKLLVIAALVVLLFG. Residues 44 to 67 form a disordered region; sequence NDDDTGAKTPAASEAPAERLSHKE.

Belongs to the TatA/E family. TatE subfamily.

Its subcellular location is the cell inner membrane. Functionally, part of the twin-arginine translocation (Tat) system that transports large folded proteins containing a characteristic twin-arginine motif in their signal peptide across membranes. TatE shares overlapping functions with TatA. In Cronobacter sakazakii (strain ATCC BAA-894) (Enterobacter sakazakii), this protein is Probable Sec-independent protein translocase protein TatE.